We begin with the raw amino-acid sequence, 225 residues long: Enolase-phosphatase E1 (225 aa).

The protein belongs to the HAD-like hydrolase superfamily. MasA/MtnC family. As to quaternary structure, monomer. Requires Mg(2+) as cofactor.

The catalysed reaction is 5-methylsulfanyl-2,3-dioxopentyl phosphate + H2O = 1,2-dihydroxy-5-(methylsulfanyl)pent-1-en-3-one + phosphate. The protein operates within amino-acid biosynthesis; L-methionine biosynthesis via salvage pathway; L-methionine from S-methyl-5-thio-alpha-D-ribose 1-phosphate: step 3/6. Its pathway is amino-acid biosynthesis; L-methionine biosynthesis via salvage pathway; L-methionine from S-methyl-5-thio-alpha-D-ribose 1-phosphate: step 4/6. Its function is as follows. Bifunctional enzyme that catalyzes the enolization of 2,3-diketo-5-methylthiopentyl-1-phosphate (DK-MTP-1-P) into the intermediate 2-hydroxy-3-keto-5-methylthiopentenyl-1-phosphate (HK-MTPenyl-1-P), which is then dephosphorylated to form the acireductone 1,2-dihydroxy-3-keto-5-methylthiopentene (DHK-MTPene). The sequence is that of Enolase-phosphatase E1 from Pseudomonas aeruginosa (strain LESB58).